The following is a 169-amino-acid chain: Disulfide bond formation protein B 1 (169 aa).

At 1–13 (MSALLKPLDNRLF) the chain is on the cytoplasmic side. The helical transmembrane segment at 14 to 30 (WPAVAIGGLLILAFVLY) threads the bilayer. At 31-48 (LQHVRGFAPCSLCIFIRL) the chain is on the periplasmic side. Cys-40 and Cys-43 are oxidised to a cystine. The chain crosses the membrane as a helical span at residues 49 to 64 (DVLGLVLAGIVGSLAP). Residues 65 to 71 (RSRIAGG) lie on the Cytoplasmic side of the membrane. A helical membrane pass occupies residues 72-89 (IAALGMLAASLGGIYHAW). Over 90-145 (SLVAEEKLAAQGMGSCKMFMGFPEWIPLDTWLPQVFQPEGLCGEVVWTLLGQSMAV) the chain is Periplasmic. Cys-105 and Cys-131 form a disulfide bridge. Residues 146-164 (WSLALFVFCLLVLAAKLAF) traverse the membrane as a helical segment. The Cytoplasmic segment spans residues 165–169 (GRRTA).

It belongs to the DsbB family.

The protein localises to the cell inner membrane. In terms of biological role, required for disulfide bond formation in some periplasmic proteins. Acts by oxidizing the DsbA protein. The chain is Disulfide bond formation protein B 1 from Pseudomonas aeruginosa (strain UCBPP-PA14).